The sequence spans 1140 residues: Envelopment polyprotein (1140 aa).

Positions 1–17 (MVGWVCISLVVLATTTA) are cleaved as a signal peptide. At 18-489 (GLTRNLYELK…VPGLHGWATT (472 aa)) the chain is on the lumenal side. Intrachain disulfides connect C30/C155, C64/C161, C113/C132, C137/C142, C179/C189, and C214/C251. The N-linked (GlcNAc...) asparagine; by host glycan is linked to N138. N-linked (GlcNAc...) asparagine; by host glycosylation is present at N351. 4 cysteine pairs are disulfide-bonded: C380-C439, C384-C393, C409-C428, and C456-C479. N-linked (GlcNAc...) asparagine; by host glycosylation occurs at N403. A helical transmembrane segment spans residues 490–510 (ALLITFCFGWLLIPTITMIIL). Residues 511 to 631 (KILRLLTFSC…LGVFRYKSRC (121 aa)) lie on the Cytoplasmic side of the membrane. The segment at 520 to 537 (CSHYSTESKFKAILERVK) is binding to the ribonucleoprotein. CCHC-type zinc fingers lie at residues 549–569 (CDVCHHECETAKELETHKKSC) and 574–595 (CPYCMTMTESTESALQAHFSIC). Binding to the ribonucleoprotein regions lie at residues 592–609 (FSICKLTNRFQENLKKSL), 596–607 (KLTNRFQENLKK), and 615–629 (KQGCYRTLGVFRYKS). Residues 611–638 (RPEVKQGCYRTLGVFRYKSRCYVGLVWG) form an interaction with host TRAF3 region. The ITAM domain occupies 615 to 638 (KQGCYRTLGVFRYKSRCYVGLVWG). Phosphotyrosine; by host occurs at positions 619 and 632. Positions 619–622 (YRTL) match the YxxL motif. A helical transmembrane segment spans residues 632–652 (YVGLVWGVLLTTELIVWAASA). Residues 653–1108 (DTPLMESGWS…EWLLGILNGN (456 aa)) are Lumenal-facing. 8 disulfides stabilise this stretch: C739–C774, C743–C781, C755–C888, C769–C899, C784–C907, C810–C819, C827–C836, and C867–C871. Residues 761-781 (YQYETSWGCNPPDCPGVGTGC) are fusion loop. An N-linked (GlcNAc...) asparagine; by host glycan is attached at N931. Intrachain disulfides connect C973–C1003, C996–C1048, C1013–C1018, C1049–C1054, and C1088–C1092. The helical transmembrane segment at 1109 to 1129 (WVVVAVLIVILILSILLFSFF) threads the bilayer. Positions 1125–1140 (LFSFFCPIRGRKNKSN) are binding to the ribonucleoprotein. Residues 1130-1140 (CPIRGRKNKSN) are Cytoplasmic-facing.

Belongs to the hantavirus envelope glycoprotein family. As to quaternary structure, homodimer. Homotetramer; forms heterotetrameric Gn-Gc spikes in the pre-fusion conformation. Interacts (via C-terminus) with the nucleoprotein. Interacts with host TUFM; this interaction contributes to the virus-induced degradation of mitochondria by autophagy, which leads to degradation of host MAVS and inhibition of type I interferon (IFN) responses. Interacts with host MAP1LC3B; this interaction contributes to the virus-induced degradation of mitochondria by autophagy, which leads to degradation of host MAVS and inhibition of type I interferon (IFN) responses. Interacts (via C-terminus) with host TRAF3 (via N-terminus); this interaction inhibits the formation of TRAF3-TBK1 complexes. Homodimer. Homotetramer; forms heterotetrameric Gn-Gc spikes in the pre-fusion conformation. Homotrimer; forms homotrimer in the post-fusion conformation at acidic pH. Interacts (via C-terminus) with the nucleoprotein. In terms of processing, envelope polyprotein precursor is quickly cleaved in vivo just after synthesis, presumably by host signal peptidase.

It is found in the virion membrane. The protein resides in the host cell surface. Its subcellular location is the host Golgi apparatus membrane. The protein localises to the host endoplasmic reticulum membrane. It localises to the host mitochondrion. In terms of biological role, forms homotetramers with glycoprotein C at the surface of the virion. Attaches the virion to host cell receptors including integrin ITGAV/ITGB3. This attachment induces virion internalization predominantly through clathrin-dependent endocytosis. Mediates the assembly and budding of infectious virus particles through its interaction with the nucleocapsid protein and the viral genome. May dysregulate normal immune and endothelial cell responses through an ITAM motif. Translocates to mitochondria, binds to host TUFM and recruits MAP1LC3B. These interactions induce mitochondrial autophagy and therefore destruction of host MAVS leading to inhibition of type I interferon (IFN) responses. Concomitant breakdown of glycoprotein N is apparently prevented by the nucleoprotein that may inhibit Gn-stimulated autophagosome-lysosome fusion. Interacts with the viral genomic RNA. Inhibits the host RIG-I/TBK1 pathway by disrupting the formation of TBK1-TRAF3 complexes and downstream signaling responses required for IFN-beta transcription. Functionally, forms homotetramers with glycoprotein N at the surface of the virion. Attaches the virion to host cell receptors including integrin ITGAV/ITGB3. This attachment induces virion internalization predominantly through clathrin-dependent endocytosis. Class II fusion protein that promotes fusion of viral membrane with host endosomal membrane after endocytosis of the virion. The protein is Envelopment polyprotein (GP) of Homo sapiens (Human).